The sequence spans 485 residues: Skb1 localization factor 1 (485 aa).

A sufficient for interaction with Skb1 region spans residues 1–200 (MSSIIQNPIE…VDDSDLTPHT (200 aa)). 3 disordered regions span residues 117-230 (NAAN…MSRN), 286-416 (ETQH…LRRS), and 446-466 (TTQE…KPEK). Polar residues predominate over residues 171–182 (SRSSRYSKTSDL). The span at 189–198 (RFVDDSDLTP) shows a compositional bias: basic and acidic residues. Polar residues-rich tracts occupy residues 218–230 (GRSS…MSRN) and 341–363 (VGSS…QQDS). A Phosphoserine modification is found at serine 222. Over residues 371-393 (SERSYRRVRDQYLSKPRLSDKNR) the composition is skewed to basic and acidic residues. The span at 394–416 (YSTFSEFPGQGTPSASQSNLRRS) shows a compositional bias: polar residues. Basic and acidic residues predominate over residues 447 to 464 (TQERKPVVKPDSIKTVKP). Positions 451–485 (KPVVKPDSIKTVKPEKKKSKGFFKKLMHKISHIFD) are required and sufficient for plasma membrane anchoring; lysine-rich, may bind to anionic lipids in the plasma membrane. Residue serine 458 is modified to Phosphoserine.

In terms of assembly, interacts with Skb1.

The protein localises to the cell membrane. In terms of biological role, acts as a membrane anchor for Skb1 in forming plasma membrane microdomains. Promotes mitotic entry by sequestering mitotic inhibitor Skb1 from its regulatory targets Cdr1 and Wee1. The polypeptide is Skb1 localization factor 1 (Schizosaccharomyces pombe (strain 972 / ATCC 24843) (Fission yeast)).